We begin with the raw amino-acid sequence, 536 residues long: Probable pectinesterase/pectinesterase inhibitor 59 (536 aa).

The first 30 residues, methionine 1–alanine 30, serve as a signal peptide directing secretion. Residues aspartate 31 to valine 183 form a pectinesterase inhibitor 59 region. Asparagine 33, asparagine 91, asparagine 116, asparagine 159, and asparagine 195 each carry an N-linked (GlcNAc...) asparagine glycan. The pectinesterase 59 stretch occupies residues asparagine 221–threonine 522. Positions 298 and 328 each coordinate substrate. Aspartate 351 serves as the catalytic Proton donor; for pectinesterase activity. Cysteine 365 and cysteine 385 form a disulfide bridge. Catalysis depends on aspartate 372, which acts as the Nucleophile; for pectinesterase activity. Positions 440 and 442 each coordinate substrate.

In the N-terminal section; belongs to the PMEI family. The protein in the C-terminal section; belongs to the pectinesterase family. As to expression, expressed in siliques.

It localises to the secreted. Its subcellular location is the cell wall. The enzyme catalyses [(1-&gt;4)-alpha-D-galacturonosyl methyl ester](n) + n H2O = [(1-&gt;4)-alpha-D-galacturonosyl](n) + n methanol + n H(+). It participates in glycan metabolism; pectin degradation; 2-dehydro-3-deoxy-D-gluconate from pectin: step 1/5. In terms of biological role, acts in the modification of cell walls via demethylesterification of cell wall pectin. The sequence is that of Probable pectinesterase/pectinesterase inhibitor 59 (PME59) from Arabidopsis thaliana (Mouse-ear cress).